Here is a 629-residue protein sequence, read N- to C-terminus: DNA ligase B (629 aa).

Lys151 (N6-AMP-lysine intermediate) is an active-site residue. Polar residues predominate over residues 588-597 (LQKQHGTNTR). Positions 588-629 (LQKQHGTNTRNEQKGDVRRVDVKQDNGTTWLPEQDSNLRPND) are disordered. Residues 598-611 (NEQKGDVRRVDVKQ) show a composition bias toward basic and acidic residues. Polar residues predominate over residues 612–629 (DNGTTWLPEQDSNLRPND).

This sequence belongs to the NAD-dependent DNA ligase family. LigB subfamily.

It carries out the reaction NAD(+) + (deoxyribonucleotide)n-3'-hydroxyl + 5'-phospho-(deoxyribonucleotide)m = (deoxyribonucleotide)n+m + AMP + beta-nicotinamide D-nucleotide.. Its function is as follows. Catalyzes the formation of phosphodiester linkages between 5'-phosphoryl and 3'-hydroxyl groups in double-stranded DNA using NAD as a coenzyme and as the energy source for the reaction. In Chromohalobacter salexigens (strain ATCC BAA-138 / DSM 3043 / CIP 106854 / NCIMB 13768 / 1H11), this protein is DNA ligase B.